The following is a 245-amino-acid chain: 1-acyl-sn-glycerol-3-phosphate acyltransferase (245 aa).

M1 bears the N-formylmethionine mark. Positions 73–78 (HQNNYD) match the HXXXXD motif motif.

This sequence belongs to the 1-acyl-sn-glycerol-3-phosphate acyltransferase family.

The protein localises to the cell inner membrane. The catalysed reaction is a 1-acyl-sn-glycero-3-phosphate + an acyl-CoA = a 1,2-diacyl-sn-glycero-3-phosphate + CoA. The enzyme catalyses a fatty acyl-[ACP] + a 1-acyl-sn-glycero-3-phosphate = a 1,2-diacyl-sn-glycero-3-phosphate + holo-[ACP]. It participates in phospholipid metabolism; CDP-diacylglycerol biosynthesis; CDP-diacylglycerol from sn-glycerol 3-phosphate: step 2/3. Its function is as follows. Converts lysophosphatidic acid (LPA) into phosphatidic acid by incorporating an acyl moiety at the 2 position. This enzyme can utilize either acyl-CoA or acyl-ACP as the fatty acyl donor. The chain is 1-acyl-sn-glycerol-3-phosphate acyltransferase (plsC) from Escherichia coli (strain K12).